Reading from the N-terminus, the 390-residue chain is Nuclear receptor subfamily 2 group F member 6 (390 aa).

Gly residues predominate over residues 1 to 15; sequence MAMVTGGWGDPGGDT. Positions 1-50 are disordered; sequence MAMVTGGWGDPGGDTNGVDKAGGSYPRATEDDSASPPGATSDAEPGDEER. A phosphoserine mark is found at Ser-35 and Ser-41. A DNA-binding region (nuclear receptor) is located at residues 54–129; that stretch reads QVDCVVCGDK…VGMRKEAVQR (76 aa). An NR C4-type zinc finger spans residues 57–77; sequence CVVCGDKSSGKHYGVFTCEGC. Ser-84 is subject to Phosphoserine. An NR C4-type zinc finger spans residues 93–117; that stretch reads CRSNRDCQIDQHHRNQCQYCRLKKC. In terms of domain architecture, NR LBD spans 157–380; sequence PVSELIAQLL…TLIRDMLLSG (224 aa). Positions 314–390 are important for dimerization; the sequence is LQEKAQVALT…STFNWPYGSG (77 aa).

It belongs to the nuclear hormone receptor family. NR2 subfamily. In terms of assembly, binds DNA as dimer; homodimer and heterodimer with NR2F2 and probably NR2F1. Interacts with THRB.

It is found in the nucleus. Transcription factor predominantly involved in transcriptional repression. Binds to promoter/enhancer response elements that contain the imperfect 5'-AGGTCA-3' direct or inverted repeats with various spacings which are also recognized by other nuclear hormone receptors. Involved in modulation of hormonal responses. Represses transcriptional activity of the lutropin-choriogonadotropic hormone receptor/LHCGR gene, the renin/REN gene and the oxytocin-neurophysin/OXT gene. Represses the triiodothyronine-dependent and -independent transcriptional activity of the thyroid hormone receptor gene in a cell type-specific manner. The corepressing function towards thyroid hormone receptor beta/THRB involves at least in part the inhibition of THRB binding to triiodothyronine response elements (TREs) by NR2F6. Inhibits NFATC transcription factor DNA binding and subsequently its transcriptional activity. Acts as transcriptional repressor of IL-17 expression in Th-17 differentiated CD4(+) T cells and may be involved in induction and/or maintenance of peripheral immunological tolerance and autoimmunity. Involved in development of forebrain circadian clock; is required early in the development of the locus coeruleus (LC). The protein is Nuclear receptor subfamily 2 group F member 6 (Nr2f6) of Mus musculus (Mouse).